The sequence spans 166 residues: Peptidyl-prolyl cis-trans isomerase-like 1 (166 aa).

One can recognise a PPIase cyclophilin-type domain in the interval 10–164 (QPPNVYLETS…DDVKIIKAYP (155 aa)). Cyclosporin A is bound by residues 54–65 (HRIIKDFMIQGG), 70–71 (TG), 99–104 (AMANAG), 109–113 (GSQFF), T119, and K125. S149 bears the Phosphoserine mark.

It belongs to the cyclophilin-type PPIase family. PPIL1 subfamily. As to quaternary structure, identified in the spliceosome C complex. Interacts with SNW1/SKIP. Interacts with CDC40/PRP17; this interaction leads to CDC40 isomerization. Interacts with RBM22.

The protein resides in the nucleus. It carries out the reaction [protein]-peptidylproline (omega=180) = [protein]-peptidylproline (omega=0). With respect to regulation, inhibited by Cyclosporin A. Functionally, involved in pre-mRNA splicing as component of the spliceosome. PPIases accelerate the folding of proteins. It catalyzes the cis-trans isomerization of proline imidic peptide bonds in oligopeptides. Catalyzes prolyl peptide bond isomerization in CDC40/PRP17. Plays an important role in embryonic brain development; this function is independent of its isomerase activity. The polypeptide is Peptidyl-prolyl cis-trans isomerase-like 1 (PPIL1) (Bos taurus (Bovine)).